Reading from the N-terminus, the 286-residue chain is Pyridoxal kinase PdxY (286 aa).

Residues Ser-9 and Met-44–Gln-45 contribute to the substrate site. ATP-binding residues include Asp-111, Glu-147, and Lys-180. Asp-221 contributes to the substrate binding site.

Belongs to the pyridoxine kinase family. PdxY subfamily. In terms of assembly, homodimer. Mg(2+) serves as cofactor.

It carries out the reaction pyridoxal + ATP = pyridoxal 5'-phosphate + ADP + H(+). Its pathway is cofactor metabolism; pyridoxal 5'-phosphate salvage; pyridoxal 5'-phosphate from pyridoxal: step 1/1. Pyridoxal kinase involved in the salvage pathway of pyridoxal 5'-phosphate (PLP). Catalyzes the phosphorylation of pyridoxal to PLP. This Burkholderia lata (strain ATCC 17760 / DSM 23089 / LMG 22485 / NCIMB 9086 / R18194 / 383) protein is Pyridoxal kinase PdxY.